Here is a 643-residue protein sequence, read N- to C-terminus: E3 ubiquitin-protein ligase AMFR (643 aa).

Residues 39–67 (PEAGPGEPDQLTASLQPEPPAPARPSAGG) are disordered. The next 6 helical transmembrane spans lie at 82 to 102 (LFVW…AKLI), 122 to 142 (FWNF…VQTV), 145 to 165 (VVMW…VQLC), 186 to 206 (VLSL…VCSI), 215 to 235 (TLAF…HVIL), and 276 to 296 (HIHM…VIFM). The RING-type zinc-finger motif lies at 341–379 (CAICWDSMQAARKLPCGHLFHNSCLRSWLEQDTSCPTCR). A helical membrane pass occupies residues 429–449 (IASWLPSFSVEVMHTTNILGI). The region spanning 456 to 498 (QLNAMAHQIQEMFPQVPYHLVLQDLQLTRSVEITTDNILEGRI) is the CUE domain. 2 disordered regions span residues 504-579 (TQRS…DERQ) and 596-624 (RFLN…PVTL). Serine 516, serine 523, and serine 542 each carry phosphoserine. Residues 548–563 (TLDFGEVEVEPSEVED) show a composition bias toward acidic residues. Residues 564-579 (FEARGSRFSKSADERQ) are compositionally biased toward basic and acidic residues. The tract at residues 622–640 (VTLRRRMLAAAAERRLQKQ) is VCP/p97-interacting motif (VIM).

In terms of assembly, interacts with RNF5. Also forms an ERAD complex containing VCP/p97, NGLY1; PSMC1; SAKS1 and RAD23B required for coupling retrotranslocation, ubiquitination and deglycosylation. Interacts with DERL1. Interacts (through a region distinct from the RING finger) with UBE2G2/UBC7. Component of the VCP/p97-AMFR/gp78 complex that enhances VCP/p97 binding to polyubiquitinated proteins for their degradation by the endoplasmic reticulum-associated degradation (ERAD) pathway. Interacts (via the VIM) with VCP/p97. Interacts (via its membrane domain) with INSIG1; the interaction initiates the sterol-mediated ubiquitination and degradation of HMGCR by the ERAD pathway. Interacts with AUP1, UBE2G2 and RNF139/TRC8; interaction with AUP1 facilitates interaction of AMFR with ubiquitin-conjugating enzyme UBE2G2 and ubiquitin ligase RNF139, leading to sterol-induced ubiquitination of HMGCR and its subsequent proteasomal degradation. Interacts with BAG6. Interacts with USP13 (via UBA 2 domain); the interaction is direct. Interacts with LMBR1L. Interacts with UBAC2 and CTNNB1. Interacts with C18orf32. As to quaternary structure, (Microbial infection) Interacts with Staphylococcus aureus HIgB; this interaction regulates AMFR-mediated inflammation by promoting TAB3 ubiquitination to promote TAB3-TAK1 complex formation. In terms of processing, palmitoylation of the RING-type zing finger by ZDHHC6 promotes localization to the peripheral endoplasmic reticulum. As to expression, widely expressed.

It is found in the endoplasmic reticulum membrane. It catalyses the reaction [E2 ubiquitin-conjugating enzyme]-S-ubiquitinyl-L-cysteine + [acceptor protein]-L-cysteine = [E2 ubiquitin-conjugating enzyme]-L-cysteine + [acceptor protein]-S-ubiquitinyl-L-cysteine.. Its pathway is protein modification; protein ubiquitination. Its function is as follows. E3 ubiquitin-protein ligase that mediates the polyubiquitination of lysine and cysteine residues on target proteins, such as CD3D, CYP3A4, CFTR, INSIG1, SOAT2/ACAT2 and APOB for proteasomal degradation. Component of a VCP/p97-AMFR/gp78 complex that participates in the final step of endoplasmic reticulum-associated degradation (ERAD). The VCP/p97-AMFR/gp78 complex is involved in the sterol-accelerated ERAD degradation of HMGCR through binding to the HMGCR-INSIG1 complex at the ER membrane. In addition, interaction of AMFR with AUP1 facilitates interaction of AMFR with ubiquitin-conjugating enzyme UBE2G2 and ubiquitin ligase RNF139, leading to sterol-induced HMGCR ubiquitination. The ubiquitinated HMGCR is then released from the ER into the cytosol for subsequent destruction. In addition to ubiquitination on lysine residues, catalyzes ubiquitination on cysteine residues: together with INSIG1, mediates polyubiquitination of SOAT2/ACAT2 at 'Cys-277', leading to its degradation when the lipid levels are low. Catalyzes ubiquitination and subsequent degradation of INSIG1 when cells are depleted of sterols. Mediates polyubiquitination of INSIG2 at 'Cys-215' in some tissues, leading to its degradation. Also regulates ERAD through the ubiquitination of UBL4A a component of the BAG6/BAT3 complex. Also acts as a scaffold protein to assemble a complex that couples ubiquitination, retranslocation and deglycosylation. Mediates tumor invasion and metastasis as a receptor for the GPI/autocrine motility factor. In association with LMBR1L and UBAC2, negatively regulates the canonical Wnt signaling pathway in the lymphocytes by promoting the ubiquitin-mediated degradation of CTNNB1 and Wnt receptors FZD6 and LRP6. Regulates NF-kappa-B and MAPK signaling pathways by mediating 'Lys-27'-linked polyubiquitination of TAB3 and promoting subsequent TAK1/MAP3K7 activation. Required for proper lipid homeostasis. The chain is E3 ubiquitin-protein ligase AMFR from Homo sapiens (Human).